The following is a 197-amino-acid chain: uncharacterized protein (197 aa).

A signal peptide spans 1 to 23; it reads MSARAPKELRLALPPCLLNRTFA. N-linked (GlcNAc...) asparagine glycosylation is found at Asn-19 and Asn-26. Residues 24 to 61 lie on the Extracellular side of the membrane; it reads SPNASGSGNTGARGPGAGGSGTCITQVGQQLFQSFSST. Residues 62–82 traverse the membrane as a helical segment; that stretch reads LVLIVLVTLIFCLIVLSLSTF. The Cytoplasmic portion of the chain corresponds to 83 to 197; the sequence is HIHKRRMKKR…EGLLQTVVLS (115 aa). Positions 94-180 are disordered; sequence MQRAQEEYER…SSPQGAHAAS (87 aa). Composition is skewed to basic and acidic residues over residues 96 to 107 and 125 to 136; these read RAQEEYERDHCS and HTKETRLERQPR. Low complexity predominate over residues 147–161; the sequence is SSSSSSSPGLLCQGP. Residues 162-171 are compositionally biased toward pro residues; it reads CAPPPPPPAS.

It is found in the membrane. This is an uncharacterized protein from Macaca fascicularis (Crab-eating macaque).